The sequence spans 61 residues: Short neurotoxin 1 (61 aa).

A compositionally biased stretch (polar residues) spans 1–16; it reads MECHNQQSSQPPTTKT. A disordered region spans residues 1–20; that stretch reads MECHNQQSSQPPTTKTCPGE. 4 cysteine pairs are disulfide-bonded: Cys-3/Cys-23, Cys-17/Cys-40, Cys-42/Cys-53, and Cys-54/Cys-59.

It belongs to the three-finger toxin family. Short-chain subfamily. Type I alpha-neurotoxin sub-subfamily. Expressed by the venom gland.

The protein resides in the secreted. Its function is as follows. Binds to muscle nicotinic acetylcholine receptor (nAChR) and inhibit acetylcholine from binding to the receptor, thereby impairing neuromuscular transmission. The sequence is that of Short neurotoxin 1 from Naja melanoleuca (Forest cobra).